Reading from the N-terminus, the 708-residue chain is Leukotoxin translocation ATP-binding protein LktB (708 aa).

Residues M1–V126 form the Peptidase C39 domain. The ABC transmembrane type-1 domain maps to F155–Q437. Helical transmembrane passes span L159 to V179, L192 to L212, A270 to Y290, L296 to L316, and V389 to G409. The ABC transporter domain maps to I469–Q704. G503 to S510 is an ATP binding site.

It belongs to the ABC transporter superfamily. Protein-1 exporter (TC 3.A.1.109) family. As to quaternary structure, homodimer.

The protein resides in the cell inner membrane. The enzyme catalyses ATP + H2O + proteinSide 1 = ADP + phosphate + proteinSide 2.. In terms of biological role, part of the ABC transporter complex LktBD involved in leukotoxin export. Transmembrane domains (TMD) form a pore in the inner membrane and the ATP-binding domain (NBD) is responsible for energy generation. This is Leukotoxin translocation ATP-binding protein LktB (lktB) from Mannheimia haemolytica (Pasteurella haemolytica).